Here is a 391-residue protein sequence, read N- to C-terminus: Putative alpha-ketoglutarate-dependent sulfonate dioxygenase (391 aa).

The Fe cation site is built by His-204 and Asp-206. 2 residues coordinate 2-oxoglutarate: Thr-231 and Trp-338. His-353 contributes to the Fe cation binding site. 2-oxoglutarate contacts are provided by Arg-364 and Arg-368.

It belongs to the TfdA dioxygenase family. Fe(2+) serves as cofactor.

The protein operates within organosulfur degradation; alkanesulfonate degradation. In terms of biological role, acts as an alpha-ketoglutarate-dependent dioxygenase active on sulfonates. This chain is Putative alpha-ketoglutarate-dependent sulfonate dioxygenase, found in Schizosaccharomyces pombe (strain 972 / ATCC 24843) (Fission yeast).